The sequence spans 469 residues: 3-isopropylmalate dehydratase large subunit (469 aa).

Residues Cys-347, Cys-407, and Cys-410 each contribute to the [4Fe-4S] cluster site.

This sequence belongs to the aconitase/IPM isomerase family. LeuC type 1 subfamily. Heterodimer of LeuC and LeuD. The cofactor is [4Fe-4S] cluster.

The catalysed reaction is (2R,3S)-3-isopropylmalate = (2S)-2-isopropylmalate. The protein operates within amino-acid biosynthesis; L-leucine biosynthesis; L-leucine from 3-methyl-2-oxobutanoate: step 2/4. Functionally, catalyzes the isomerization between 2-isopropylmalate and 3-isopropylmalate, via the formation of 2-isopropylmaleate. The sequence is that of 3-isopropylmalate dehydratase large subunit from Photorhabdus laumondii subsp. laumondii (strain DSM 15139 / CIP 105565 / TT01) (Photorhabdus luminescens subsp. laumondii).